We begin with the raw amino-acid sequence, 153 residues long: Large ribosomal subunit protein uL15 (153 aa).

Positions 1–40 (MTDKKRRQRGSRTHGGGTHKNRRGAGNRGGRGRAGRKKHE) are enriched in basic residues. Positions 1–60 (MTDKKRRQRGSRTHGGGTHKNRRGAGNRGGRGRAGRKKHEQHNYEDVGKSGFKRPEKTDR) are disordered. Residues 41 to 60 (QHNYEDVGKSGFKRPEKTDR) are compositionally biased toward basic and acidic residues.

Belongs to the universal ribosomal protein uL15 family. Part of the 50S ribosomal subunit.

Binds to the 23S rRNA. This chain is Large ribosomal subunit protein uL15, found in Halobacterium salinarum (strain ATCC 29341 / DSM 671 / R1).